The primary structure comprises 235 residues: Small ribosomal subunit protein uS2 (235 aa).

Belongs to the universal ribosomal protein uS2 family.

This Synechococcus sp. (strain RCC307) protein is Small ribosomal subunit protein uS2.